A 238-amino-acid chain; its full sequence is Probable transcriptional regulatory protein SPH_2064 (238 aa).

It belongs to the TACO1 family. YeeN subfamily.

Its subcellular location is the cytoplasm. The protein is Probable transcriptional regulatory protein SPH_2064 of Streptococcus pneumoniae (strain Hungary19A-6).